The primary structure comprises 278 residues: Glucosamine-6-phosphate deaminase (278 aa).

Asp-72 functions as the Proton acceptor; for enolization step in the catalytic mechanism. The active-site For ring-opening step is Asp-141. The active-site Proton acceptor; for ring-opening step is His-143. Glu-148 acts as the For ring-opening step in catalysis.

The protein belongs to the glucosamine/galactosamine-6-phosphate isomerase family. In terms of assembly, homohexamer.

It localises to the cytoplasm. The enzyme catalyses alpha-D-glucosamine 6-phosphate + H2O = beta-D-fructose 6-phosphate + NH4(+). Its pathway is nucleotide-sugar biosynthesis; UDP-N-acetyl-alpha-D-glucosamine biosynthesis; alpha-D-glucosamine 6-phosphate from D-fructose 6-phosphate: step 1/1. Its function is as follows. Catalyzes the reversible conversion of alpha-D-glucosamine 6-phosphate (GlcN-6P) into beta-D-fructose 6-phosphate (Fru-6P) and ammonium ion, a regulatory reaction step in de novo uridine diphosphate-N-acetyl-alpha-D-glucosamine (UDP-GlcNAc) biosynthesis via hexosamine pathway. The polypeptide is Glucosamine-6-phosphate deaminase (Gnpda1) (Aedes aegypti (Yellowfever mosquito)).